Reading from the N-terminus, the 260-residue chain is Phosphate import ATP-binding protein PstB (260 aa).

Positions 14-255 constitute an ABC transporter domain; it reads IETENLNLFY…PKNTKTEEYI (242 aa). 46 to 53 lines the ATP pocket; it reads GPSGCGKS.

Belongs to the ABC transporter superfamily. Phosphate importer (TC 3.A.1.7) family. In terms of assembly, the complex is composed of two ATP-binding proteins (PstB), two transmembrane proteins (PstC and PstA) and a solute-binding protein (PstS).

Its subcellular location is the cell inner membrane. It carries out the reaction phosphate(out) + ATP + H2O = ADP + 2 phosphate(in) + H(+). Functionally, part of the ABC transporter complex PstSACB involved in phosphate import. Responsible for energy coupling to the transport system. The protein is Phosphate import ATP-binding protein PstB of Borreliella burgdorferi (strain ATCC 35210 / DSM 4680 / CIP 102532 / B31) (Borrelia burgdorferi).